Here is a 71-residue protein sequence, read N- to C-terminus: Plasticin-C2 (71 aa).

The signal sequence occupies residues 1–22; sequence MAFLKKSLLLVLFLALVPLSIC. A propeptide spanning residues 23–45 is cleaved from the precursor; the sequence is EEEKREEEDEEKQEDDDQSENKR. Positions 25–46 are disordered; sequence EKREEEDEEKQEDDDQSENKRG. Over residues 26–40 the composition is skewed to acidic residues; sequence KREEEDEEKQEDDDQ. Residue Asn68 is modified to Asparagine amide. A propeptide spanning residues 70–71 is cleaved from the precursor; the sequence is ES.

The protein belongs to the frog skin active peptide (FSAP) family. Plasticin subfamily. Expressed by the skin glands.

Its subcellular location is the secreted. The protein localises to the target cell membrane. Its function is as follows. Neutral peptide with no antimicrobial activity. May act in synergy with cationic peptides by enhancing their activity. Has a moderate hemolytic activity. The protein is Plasticin-C2 of Agalychnis callidryas (Red-eyed tree frog).